The chain runs to 364 residues: MANKTVLFNKHLESNGKMVDFHGWDMPLNYGSQIEEHHAVRQDAGMFDVSHMTVVDVIGDDACAFLRKLLANDVAKLKVPGKALYGGMLDHNGGVIDDLITYYLSDTEYRIVVNSATREKDLAWINEQVNGFSVEVTERPELAMIAVQGPNAKAKAATVFNAEQNAAIEGMKPFFGVQTGSLFIATTGYTGETGYEVIVPEADAEALWQAFLEAGIKPCGLGARDTLRLEAGMNLYGLDMDESVNPLAANMGWTVAWEPADRDFNGRQALEKIKAEGTDKLVGLIMDAKGVIRHGMSVFFTDSDGVEQQGIITSGTFSPTLGYSIAMARVPRSIGDVAEVEMRKKRVPVKVIAPSFVRNGKQAF.

Belongs to the GcvT family. In terms of assembly, the glycine cleavage system is composed of four proteins: P, T, L and H.

It catalyses the reaction N(6)-[(R)-S(8)-aminomethyldihydrolipoyl]-L-lysyl-[protein] + (6S)-5,6,7,8-tetrahydrofolate = N(6)-[(R)-dihydrolipoyl]-L-lysyl-[protein] + (6R)-5,10-methylene-5,6,7,8-tetrahydrofolate + NH4(+). Functionally, the glycine cleavage system catalyzes the degradation of glycine. This is Aminomethyltransferase from Shewanella halifaxensis (strain HAW-EB4).